Here is a 699-residue protein sequence, read N- to C-terminus: Polyribonucleotide nucleotidyltransferase (699 aa).

Residues D485 and D491 each contribute to the Mg(2+) site. In terms of domain architecture, KH spans 552–611; that stretch reads PRITTIKINPEKIRDVIGKGGAVIRALTEETGTTIELEDDGTVKIASSNGEATKEAIRRI. The S1 motif domain occupies 621–689; the sequence is GRIYNGKVIR…RQGRVRLSIK (69 aa).

The protein belongs to the polyribonucleotide nucleotidyltransferase family. Component of the RNA degradosome, which is a multiprotein complex involved in RNA processing and mRNA degradation. Mg(2+) is required as a cofactor.

It is found in the cytoplasm. The enzyme catalyses RNA(n+1) + phosphate = RNA(n) + a ribonucleoside 5'-diphosphate. Involved in mRNA degradation. Catalyzes the phosphorolysis of single-stranded polyribonucleotides processively in the 3'- to 5'-direction. The protein is Polyribonucleotide nucleotidyltransferase of Shewanella sp. (strain MR-4).